Reading from the N-terminus, the 901-residue chain is Aconitate hydratase A (901 aa).

[4Fe-4S] cluster-binding residues include Cys443, Cys509, and Cys512.

This sequence belongs to the aconitase/IPM isomerase family. Monomer. It depends on [4Fe-4S] cluster as a cofactor.

The enzyme catalyses citrate = D-threo-isocitrate. It carries out the reaction (2S,3R)-3-hydroxybutane-1,2,3-tricarboxylate = 2-methyl-cis-aconitate + H2O. It participates in carbohydrate metabolism; tricarboxylic acid cycle; isocitrate from oxaloacetate: step 2/2. The protein operates within organic acid metabolism; propanoate degradation. Involved in the catabolism of short chain fatty acids (SCFA) via the tricarboxylic acid (TCA)(acetyl degradation route) and probably the 2-methylcitrate cycle I (propionate degradation route). Catalyzes the reversible isomerization of citrate to isocitrate via cis-aconitate. Could catalyze the hydration of 2-methyl-cis-aconitate to yield (2R,3S)-2-methylisocitrate. The apo form of AcnA functions as a RNA-binding regulatory protein. This is Aconitate hydratase A (acnA) from Staphylococcus epidermidis (strain ATCC 12228 / FDA PCI 1200).